A 254-amino-acid polypeptide reads, in one-letter code: 3-oxo-5-alpha-steroid 4-dehydrogenase 2 (254 aa).

The next 4 helical transmembrane spans lie at 8 to 28 (SPVLAGSATLVALGALALYVA), 72 to 92 (PLSLFGPPGTVLLGLFCLHYF), 146 to 166 (FSLGVFLFILGMGINIHSDYI), and 206 to 226 (LATWSLPALAFAFFSLCFLGL).

It belongs to the steroid 5-alpha reductase family. Expressed in high levels in the prostate and many other androgen-sensitive tissues.

It localises to the microsome membrane. It is found in the endoplasmic reticulum membrane. It catalyses the reaction a 3-oxo-5alpha-steroid + NADP(+) = a 3-oxo-Delta(4)-steroid + NADPH + H(+). The catalysed reaction is 17beta-hydroxy-5alpha-androstan-3-one + NADP(+) = testosterone + NADPH + H(+). It carries out the reaction 5alpha-pregnane-3,20-dione + NADP(+) = progesterone + NADPH + H(+). Its function is as follows. Converts testosterone (T) into 5-alpha-dihydrotestosterone (DHT) and progesterone or corticosterone into their corresponding 5-alpha-3-oxosteroids. It plays a central role in sexual differentiation and androgen physiology. The polypeptide is 3-oxo-5-alpha-steroid 4-dehydrogenase 2 (SRD5A2) (Homo sapiens (Human)).